The primary structure comprises 432 residues: MTNVVVVGSQWGDEGKGKIVDWLSERADIVVRYQGGHNAGHTLVIDGTSYKLSLLPSGVVRPGKMAVIGNGVVVDPHALIAEIEKLAGQGVTITPDNLRVADNATLILSLHRELDAMREDAASNSGTKIGTTRRGIGPAYEDKVGRRAIRVMDLADLDSLPGKVDRILTHHNALRRGLGVAEVSHQTIMDELTSVAERVLPFRDTVWLFLDKERRRGARILFEGAQGSLLDIDHGTYPFVTSSNTVAGQAAAGSGMGPGSLGYILGITKAYTTRVGEGPFPTELKDEIGEFLGQKGHEFGVVTGRKRRCGWFDAALVRQSVATNGITGIALTKLDVLDGLEELKICVGYMLDGEQIDHLPASQGAQARVEPIYITLEGWKESTVGARSWADLPAQAIKYVRQVEELIGAPVALLSTSPERDDTILVTDPFED.

Residues 12–18 (GDEGKGK) and 40–42 (GHT) contribute to the GTP site. Aspartate 13 acts as the Proton acceptor in catalysis. Aspartate 13 and glycine 40 together coordinate Mg(2+). IMP contacts are provided by residues 13–16 (DEGK), 38–41 (NAGH), threonine 132, arginine 146, glutamine 226, threonine 241, and arginine 305. Histidine 41 acts as the Proton donor in catalysis. 301 to 307 (VVTGRKR) is a binding site for substrate. GTP-binding positions include arginine 307, 333-335 (KLD), and 415-417 (STS).

It belongs to the adenylosuccinate synthetase family. Homodimer. Mg(2+) is required as a cofactor.

Its subcellular location is the cytoplasm. The enzyme catalyses IMP + L-aspartate + GTP = N(6)-(1,2-dicarboxyethyl)-AMP + GDP + phosphate + 2 H(+). It participates in purine metabolism; AMP biosynthesis via de novo pathway; AMP from IMP: step 1/2. In terms of biological role, plays an important role in the de novo pathway of purine nucleotide biosynthesis. Catalyzes the first committed step in the biosynthesis of AMP from IMP. The chain is Adenylosuccinate synthetase from Rhizobium etli (strain CIAT 652).